We begin with the raw amino-acid sequence, 206 residues long: Small ribosomal subunit protein uS4 (206 aa).

In terms of domain architecture, S4 RNA-binding spans 96–156 (GRLDNVVYRM…EKSKKQARIK (61 aa)).

The protein belongs to the universal ribosomal protein uS4 family. Part of the 30S ribosomal subunit. Contacts protein S5. The interaction surface between S4 and S5 is involved in control of translational fidelity.

In terms of biological role, one of the primary rRNA binding proteins, it binds directly to 16S rRNA where it nucleates assembly of the body of the 30S subunit. Functionally, with S5 and S12 plays an important role in translational accuracy. This is Small ribosomal subunit protein uS4 from Histophilus somni (strain 2336) (Haemophilus somnus).